The sequence spans 714 residues: MALTAALKAQIAAWYKALQDQIPDFIPRAPQRQMIADVARTLAGEEGRHLAIEAPTGVGKTLSYLIPGIAIAREEQKTLVVSTANVALQDQIFSKDLPLLRKIIPDLRFTAAFGRGRYVCPRNLAALASSEPTQQDLLAFLDDELTPNNQEEQKRCARLKGDLDGYKWDGLRDHTDIAIDDDLWRRLSTDKASCLNRNCHYYRECPFFVARREIQEAEVVVANHALVMAAMESEAVLPEPKHLLLVLDEGHHLPDVARDALEMSAEITASWYRLQLDLFSKLVATCMEQFRPKTTPPLANPERLNAHCEEVYELIASLNAILNLYMPAAQEAEHRFAMGELPDEVMEICQRLAKLTETLRGLAESFLNDLSEKTGSHDIVRLHRVILQMNRALGMFEAQSKLWRLASMAQSSGAPVSKWATREIREGQLHVWFHCVGIRVSDQLERLLWRSVPHIIVTSATLRSLNSFSRLQEMSGLKEKAGDRFVALDSPFNHVEQGKLVIPQMRYEPTIDNEEQHIAEMAAYFREQLESKKHHGMLVLFASGRAMQRFLEHVADVRLLLLVQGDQPRYRLVELHRKRVESGERSVLVGLQSFAEGLDLKGELLTQVHIHKIAFPPIDSPVVITEGEWLKSLNRYPFEVQSLPSASFNLIQQVGRLIRSHACRGEVVIYDKRLLTKNYGQRLLNALPVFPIEQPAVPDVIVKPKAKPARRRRR.

In terms of domain architecture, Helicase ATP-binding spans 17–294 (ALQDQIPDFI…TCMEQFRPKT (278 aa)). 54 to 61 (APTGVGKT) is a binding site for ATP. Residues cysteine 120, cysteine 194, cysteine 199, and cysteine 205 each contribute to the [4Fe-4S] cluster site. A DEAH box motif is present at residues 248 to 251 (DEGH). The Helicase C-terminal domain maps to 517 to 698 (HIAEMAAYFR…VFPIEQPAVP (182 aa)).

It belongs to the helicase family. DinG subfamily. Type 1 sub-subfamily. [4Fe-4S] cluster is required as a cofactor.

It carries out the reaction Couples ATP hydrolysis with the unwinding of duplex DNA at the replication fork by translocating in the 5'-3' direction. This creates two antiparallel DNA single strands (ssDNA). The leading ssDNA polymer is the template for DNA polymerase III holoenzyme which synthesizes a continuous strand.. The catalysed reaction is ATP + H2O = ADP + phosphate + H(+). In terms of biological role, DNA-dependent ATPase and 5'-3' DNA helicase. Unwinds D-loops, R-loops, forked DNA and G-quadruplex DNA. This is ATP-dependent DNA helicase DinG from Salmonella typhimurium (strain LT2 / SGSC1412 / ATCC 700720).